The chain runs to 512 residues: Bifunctional NAD(P)H-hydrate repair enzyme Nnr (512 aa).

An NAD(P)H-hydrate epimerase region spans residues 1–220; the sequence is MPIVAYDPDK…GVPPRLVLPQ (220 aa). Positions 11 to 218 constitute a YjeF N-terminal domain; it reads VREADRAAVR…PIGVPPRLVL (208 aa). The interval 58-62 is NADPHX 1; for epimerase activity; that stretch reads NNGGD. Positions 59 and 127 each coordinate K(+). The interval 131–137 is NADPHX 1; for epimerase activity; sequence GTGSGGE. (6S)-NADPHX is bound at residue Asp-161. Thr-164 contacts K(+). The YjeF C-terminal domain occupies 228–509; that stretch reads GYEDLSHMRL…HQAALVLGGL (282 aa). The tract at residues 228–512 is ADP-dependent (S)-NAD(P)H-hydrate dehydratase; sequence GYEDLSHMRL…ALVLGGLGDV (285 aa). Position 335 (Gly-335) interacts with (6S)-NADPHX. An NADPHX 2; for dehydratase activity region spans residues 385-391; it reads HEGEAAC. Residues 421–425 and 440–449 contribute to the ADP site; these read KGRNS and HPNLSVPGSG. Residue Asp-450 participates in (6S)-NADPHX binding.

In the N-terminal section; belongs to the NnrE/AIBP family. It in the C-terminal section; belongs to the NnrD/CARKD family. It depends on K(+) as a cofactor.

The catalysed reaction is (6S)-NADHX + ADP = AMP + phosphate + NADH + H(+). The enzyme catalyses (6S)-NADPHX + ADP = AMP + phosphate + NADPH + H(+). It carries out the reaction (6R)-NADHX = (6S)-NADHX. It catalyses the reaction (6R)-NADPHX = (6S)-NADPHX. In terms of biological role, bifunctional enzyme that catalyzes the epimerization of the S- and R-forms of NAD(P)HX and the dehydration of the S-form of NAD(P)HX at the expense of ADP, which is converted to AMP. This allows the repair of both epimers of NAD(P)HX, a damaged form of NAD(P)H that is a result of enzymatic or heat-dependent hydration. This Thermanaerovibrio acidaminovorans (strain ATCC 49978 / DSM 6589 / Su883) (Selenomonas acidaminovorans) protein is Bifunctional NAD(P)H-hydrate repair enzyme Nnr (nnr).